The primary structure comprises 325 residues: Beta-ketoacyl-[acyl-carrier-protein] synthase III (325 aa).

Active-site residues include Cys112 and His250. Residues Gln251–Arg255 are ACP-binding. Asn280 is an active-site residue.

The protein belongs to the thiolase-like superfamily. FabH family. As to quaternary structure, homodimer.

It localises to the cytoplasm. The catalysed reaction is malonyl-[ACP] + acetyl-CoA + H(+) = 3-oxobutanoyl-[ACP] + CO2 + CoA. The protein operates within lipid metabolism; fatty acid biosynthesis. In terms of biological role, catalyzes the condensation reaction of fatty acid synthesis by the addition to an acyl acceptor of two carbons from malonyl-ACP. Catalyzes the first condensation reaction which initiates fatty acid synthesis and may therefore play a role in governing the total rate of fatty acid production. Possesses both acetoacetyl-ACP synthase and acetyl transacylase activities. Its substrate specificity determines the biosynthesis of branched-chain and/or straight-chain of fatty acids. The polypeptide is Beta-ketoacyl-[acyl-carrier-protein] synthase III (Clostridium acetobutylicum (strain ATCC 824 / DSM 792 / JCM 1419 / IAM 19013 / LMG 5710 / NBRC 13948 / NRRL B-527 / VKM B-1787 / 2291 / W)).